The primary structure comprises 227 residues: Phosphoribosylformylglycinamidine synthase subunit PurQ (227 aa).

A Glutamine amidotransferase type-1 domain is found at 3–225; that stretch reads FAVIVFPGSN…LRNWRESHVV (223 aa). The Nucleophile role is filled by cysteine 86. Catalysis depends on residues histidine 194 and glutamate 196.

Part of the FGAM synthase complex composed of 1 PurL, 1 PurQ and 2 PurS subunits.

It is found in the cytoplasm. The enzyme catalyses N(2)-formyl-N(1)-(5-phospho-beta-D-ribosyl)glycinamide + L-glutamine + ATP + H2O = 2-formamido-N(1)-(5-O-phospho-beta-D-ribosyl)acetamidine + L-glutamate + ADP + phosphate + H(+). It carries out the reaction L-glutamine + H2O = L-glutamate + NH4(+). It participates in purine metabolism; IMP biosynthesis via de novo pathway; 5-amino-1-(5-phospho-D-ribosyl)imidazole from N(2)-formyl-N(1)-(5-phospho-D-ribosyl)glycinamide: step 1/2. Its function is as follows. Part of the phosphoribosylformylglycinamidine synthase complex involved in the purines biosynthetic pathway. Catalyzes the ATP-dependent conversion of formylglycinamide ribonucleotide (FGAR) and glutamine to yield formylglycinamidine ribonucleotide (FGAM) and glutamate. The FGAM synthase complex is composed of three subunits. PurQ produces an ammonia molecule by converting glutamine to glutamate. PurL transfers the ammonia molecule to FGAR to form FGAM in an ATP-dependent manner. PurS interacts with PurQ and PurL and is thought to assist in the transfer of the ammonia molecule from PurQ to PurL. In Halalkalibacterium halodurans (strain ATCC BAA-125 / DSM 18197 / FERM 7344 / JCM 9153 / C-125) (Bacillus halodurans), this protein is Phosphoribosylformylglycinamidine synthase subunit PurQ.